The primary structure comprises 331 residues: MAKMYYDQDADAEVLKGKKIAVIGFGSQGHAHALNLRDSGFDVVVGLYEGSKSKERAEKEGLTVLTVEEAAKVADVIMMLIPDEKQAKVYKESIEKNLTEGKALAFAHGFNIHFKQIVPPENVDVFMVAPKGPGHLVRRMYQEGKGVPCLVAVHQNYTGKALDIALAYAKGIGGTKAGAIETTFKEETETDLFGEQAVLCGGLTELMKAGFETLVEAGYQPEIAYFECVNEMKLIVDLIYEGGFSYMRYSISDTAEFGDYMTGKRIITEETRKEMKKILEEIQTGKFAKEWLLENQVGRPQYNAIKEREANHPIEKVGKSLREMMPWLSKK.

The 181-residue stretch at 2–182 folds into the KARI N-terminal Rossmann domain; that stretch reads AKMYYDQDAD…GGTKAGAIET (181 aa). Residues 25-28, Ser51, Ser53, and 83-86 contribute to the NADP(+) site; these read FGSQ and DEKQ. Residue His108 is part of the active site. Gly134 is a binding site for NADP(+). The 146-residue stretch at 183–328 folds into the KARI C-terminal knotted domain; sequence TFKEETETDL…KSLREMMPWL (146 aa). The Mg(2+) site is built by Asp191, Glu195, Glu227, and Glu231. Position 252 (Ser252) interacts with substrate.

The protein belongs to the ketol-acid reductoisomerase family. Mg(2+) is required as a cofactor.

It carries out the reaction (2R)-2,3-dihydroxy-3-methylbutanoate + NADP(+) = (2S)-2-acetolactate + NADPH + H(+). It catalyses the reaction (2R,3R)-2,3-dihydroxy-3-methylpentanoate + NADP(+) = (S)-2-ethyl-2-hydroxy-3-oxobutanoate + NADPH + H(+). It functions in the pathway amino-acid biosynthesis; L-isoleucine biosynthesis; L-isoleucine from 2-oxobutanoate: step 2/4. It participates in amino-acid biosynthesis; L-valine biosynthesis; L-valine from pyruvate: step 2/4. In terms of biological role, involved in the biosynthesis of branched-chain amino acids (BCAA). Catalyzes an alkyl-migration followed by a ketol-acid reduction of (S)-2-acetolactate (S2AL) to yield (R)-2,3-dihydroxy-isovalerate. In the isomerase reaction, S2AL is rearranged via a Mg-dependent methyl migration to produce 3-hydroxy-3-methyl-2-ketobutyrate (HMKB). In the reductase reaction, this 2-ketoacid undergoes a metal-dependent reduction by NADPH to yield (R)-2,3-dihydroxy-isovalerate. The chain is Ketol-acid reductoisomerase (NADP(+)) from Caldanaerobacter subterraneus subsp. tengcongensis (strain DSM 15242 / JCM 11007 / NBRC 100824 / MB4) (Thermoanaerobacter tengcongensis).